The chain runs to 140 residues: Putative membrane protein ORF7 (140 aa).

The chain crosses the membrane as a helical span at residues 44 to 60; sequence TCAVSFFALFMLIIWVL. The segment at 66–118 is disordered; sequence PEGSTTRGTDAHTQTEGSTTRGTDAHTQTEGSRDQGSMTPEADDLTRPPLGHG. Residues 68 to 103 show a composition bias toward polar residues; sequence GSTTRGTDAHTQTEGSTTRGTDAHTQTEGSRDQGSM.

The protein resides in the membrane. The polypeptide is Putative membrane protein ORF7 (ORF7) (Ictalurid herpesvirus 1 (strain Auburn) (IcHV-1)).